Here is a 191-residue protein sequence, read N- to C-terminus: Protein YceI (191 aa).

The N-terminal stretch at 1 to 22 (MKKSLLGLTFASLMFSAGSAVA) is a signal peptide.

Belongs to the UPF0312 family. Type 1 subfamily.

It is found in the periplasm. This Shigella boydii serotype 4 (strain Sb227) protein is Protein YceI.